Reading from the N-terminus, the 327-residue chain is Thiamine-monophosphate kinase (327 aa).

4 residues coordinate Mg(2+): Asp30, Ser45, Ser46, and Asp47. His54 contacts substrate. Asp76 serves as a coordination point for Mg(2+). ATP contacts are provided by residues Tyr106, 123–124 (GD), and Arg149. Residue Asp124 coordinates Mg(2+). Residue Asp221 participates in Mg(2+) binding. An ATP-binding site is contributed by Ser223. Position 224 (Asp224) interacts with Mg(2+). The substrate site is built by Glu268 and Phe321.

This sequence belongs to the thiamine-monophosphate kinase family.

It carries out the reaction thiamine phosphate + ATP = thiamine diphosphate + ADP. Its pathway is cofactor biosynthesis; thiamine diphosphate biosynthesis; thiamine diphosphate from thiamine phosphate: step 1/1. Catalyzes the ATP-dependent phosphorylation of thiamine-monophosphate (TMP) to form thiamine-pyrophosphate (TPP), the active form of vitamin B1. This chain is Thiamine-monophosphate kinase, found in Synechococcus elongatus (strain ATCC 33912 / PCC 7942 / FACHB-805) (Anacystis nidulans R2).